Here is an 840-residue protein sequence, read N- to C-terminus: Radial spoke head 10 homolog B (840 aa).

Composition is skewed to basic and acidic residues over residues 1-16 (MVKE…DKSA) and 51-63 (QPKD…EVKS). The tract at residues 1–74 (MVKEKKKADK…SLPNEDTTQY (74 aa)) is disordered. 10 MORN repeats span residues 86–108 (SYEG…QGGC), 109–131 (TYQG…ADGL), 132–154 (KYEG…PDGS), 155–177 (TYEG…STQP), 179–201 (SYIG…NQEG), 204–226 (WYEG…KSGN), 227–249 (IYEG…LTTN), 251–273 (EYTG…FLKR), 284–306 (EYVG…ASGA), and 307–329 (MYEG…KNGR). A coiled-coil region spans residues 758–801 (KEKVKENRLHNEAMALQRKMENEELEARLNSLREEEAKRQDYEV). Residues 810–840 (VDAPSSSFTPSPPKEDTVVSSKSITSKKKKK) form a disordered region.

Interacts with RSPH6A. Does not appear to be part of the axonemal radial spoke complexes 1 or 2.

It is found in the cytoplasm. It localises to the cytoskeleton. The protein resides in the cilium axoneme. The protein localises to the cell projection. Its subcellular location is the cilium. It is found in the flagellum. Its function is as follows. May function as part of the axonemal radial spoke complex 3 (RS3). Radial spoke complexes are important for ciliary motility. This Bos taurus (Bovine) protein is Radial spoke head 10 homolog B (RSPH10B).